A 336-amino-acid chain; its full sequence is tRNA N6-adenosine threonylcarbamoyltransferase (336 aa).

Fe cation-binding residues include His114 and His118. Residues Leu136 to Gly140, Asp169, Gly182, Asp186, and Asn275 contribute to the substrate site. Asp301 contributes to the Fe cation binding site.

It belongs to the KAE1 / TsaD family. Fe(2+) is required as a cofactor.

The protein resides in the cytoplasm. The enzyme catalyses L-threonylcarbamoyladenylate + adenosine(37) in tRNA = N(6)-L-threonylcarbamoyladenosine(37) in tRNA + AMP + H(+). Functionally, required for the formation of a threonylcarbamoyl group on adenosine at position 37 (t(6)A37) in tRNAs that read codons beginning with adenine. Is involved in the transfer of the threonylcarbamoyl moiety of threonylcarbamoyl-AMP (TC-AMP) to the N6 group of A37, together with TsaE and TsaB. TsaD likely plays a direct catalytic role in this reaction. In Streptococcus pneumoniae (strain Taiwan19F-14), this protein is tRNA N6-adenosine threonylcarbamoyltransferase.